We begin with the raw amino-acid sequence, 99 residues long: Large ribosomal subunit protein uL23 (99 aa).

The protein belongs to the universal ribosomal protein uL23 family. As to quaternary structure, part of the 50S ribosomal subunit. Contacts protein L29, and trigger factor when it is bound to the ribosome.

Functionally, one of the early assembly proteins it binds 23S rRNA. One of the proteins that surrounds the polypeptide exit tunnel on the outside of the ribosome. Forms the main docking site for trigger factor binding to the ribosome. The sequence is that of Large ribosomal subunit protein uL23 from Rhodopseudomonas palustris (strain BisB18).